A 215-amino-acid chain; its full sequence is Pyrophosphatase PpaX (215 aa).

The active-site Nucleophile is aspartate 9.

It belongs to the HAD-like hydrolase superfamily. PpaX family. Mg(2+) serves as cofactor.

The enzyme catalyses diphosphate + H2O = 2 phosphate + H(+). Its function is as follows. Hydrolyzes pyrophosphate formed during P-Ser-HPr dephosphorylation by HPrK/P. Might play a role in controlling the intracellular pyrophosphate pool. The polypeptide is Pyrophosphatase PpaX (Bacillus mycoides (strain KBAB4) (Bacillus weihenstephanensis)).